A 544-amino-acid polypeptide reads, in one-letter code: Chaperonin GroEL (544 aa).

ATP contacts are provided by residues 30–33 (TLGP), Lys-51, 87–91 (DGTTT), Gly-415, and Asp-495.

This sequence belongs to the chaperonin (HSP60) family. As to quaternary structure, forms a cylinder of 14 subunits composed of two heptameric rings stacked back-to-back. Interacts with the co-chaperonin GroES.

It is found in the cytoplasm. It catalyses the reaction ATP + H2O + a folded polypeptide = ADP + phosphate + an unfolded polypeptide.. Functionally, together with its co-chaperonin GroES, plays an essential role in assisting protein folding. The GroEL-GroES system forms a nano-cage that allows encapsulation of the non-native substrate proteins and provides a physical environment optimized to promote and accelerate protein folding. The sequence is that of Chaperonin GroEL from Methylobacillus flagellatus (strain ATCC 51484 / DSM 6875 / VKM B-1610 / KT).